Reading from the N-terminus, the 247-residue chain is Putative urease accessory protein UreD homolog (247 aa).

Belongs to the UreD family. UreD, UreF and UreG form a complex that acts as a GTP-hydrolysis-dependent molecular chaperone, activating the urease apoprotein by helping to assemble the nickel containing metallocenter of UreC. The UreE protein probably delivers the nickel.

Its subcellular location is the cytoplasm. Its function is as follows. Required for maturation of urease via the functional incorporation of the urease nickel metallocenter. In Escherichia coli O157:H7, this protein is Putative urease accessory protein UreD homolog.